The chain runs to 387 residues: Alkanesulfonate monooxygenase (387 aa).

The protein belongs to the SsuD family.

It carries out the reaction an alkanesulfonate + FMNH2 + O2 = an aldehyde + FMN + sulfite + H2O + 2 H(+). Its function is as follows. Catalyzes the desulfonation of aliphatic sulfonates. This chain is Alkanesulfonate monooxygenase, found in Xanthomonas axonopodis pv. citri (strain 306).